A 239-amino-acid chain; its full sequence is Adapter protein MecA (239 aa).

Over residues 118 to 128 the composition is skewed to basic and acidic residues; it reads EQRTKEKEAQG. The interval 118–137 is disordered; it reads EQRTKEKEAQGSKRQKSSAR.

This sequence belongs to the MecA family. As to quaternary structure, homodimer.

Enables the recognition and targeting of unfolded and aggregated proteins to the ClpC protease or to other proteins involved in proteolysis. The polypeptide is Adapter protein MecA (Staphylococcus aureus (strain JH1)).